Here is a 708-residue protein sequence, read N- to C-terminus: C-Jun-amino-terminal kinase-interacting protein 1 (708 aa).

Positions 1–26 are disordered; sequence MAERESGLSGGAASPPAASPFLGLHI. A compositionally biased stretch (low complexity) spans 11–24; the sequence is GAASPPAASPFLGL. Ser14, Ser28, and Ser39 each carry phosphoserine. Residues 69-368 form a disordered region; that stretch reads PPRAGLLSAG…PPRASLSSDT (300 aa). The span at 71–87 shows a compositional bias: low complexity; it reads RAGLLSAGSSGSAGSRL. Thr103 carries the post-translational modification Phosphothreonine; by MAPK8, MAPK9 and MAPK10. Positions 105-116 are enriched in acidic residues; that stretch reads GAEDDEEDDDEL. The segment at 126–282 is JNK-binding domain (JBD); sequence SKAESGQEPA…EATEEIYLTP (157 aa). Ser149 is modified (phosphoserine). Positions 154-173 are minimal inhibitory domain (MID); sequence RPKRPTTLNLFPQVPRSQDT. Polar residues predominate over residues 159 to 179; it reads TTLNLFPQVPRSQDTLNNNSL. Phosphoserine is present on residues Ser178, Ser184, Ser190, Ser192, and Ser193. The segment covering 191–201 has biased composition (polar residues); it reads RSSSPLKTGEQ. Position 202 is a phosphothreonine; by MAPK8, MAPK9 and MAPK10 (Thr202). Position 211 is a phosphoserine (Ser211). Over residues 220 to 232 the composition is skewed to polar residues; the sequence is PVPTQDRGTSTDS. The span at 264-274 shows a compositional bias: basic and acidic residues; it reads IHYQADVRLEA. An interaction with MAP3K7 region spans residues 280–468; it reads LTPVQRPPDP…NVFMSGRSRS (189 aa). Over residues 292 to 308 the composition is skewed to polar residues; it reads PTSTFLPPTESRMSVSS. A phosphoserine mark is found at Ser308, Ser325, Ser327, Ser337, Ser352, Ser363, Ser366, Ser404, and Ser406. 2 short sequence motifs (D-box) span residues 350-357 and 361-369; these read RGSLGEPP and RASLSSDTS. Thr408 carries the phosphothreonine modification. Positions 426–448 are disordered; that stretch reads EEYEEAPQPRPPTCLSEDSTPDE. A phosphoserine mark is found at Ser441 and Ser444. Position 445 is a phosphothreonine (Thr445). Phosphoserine occurs at positions 466, 468, 469, and 470. Residues 468-657 are interaction with VRK2; sequence SSSAESFGLF…PKNNKYFGFI (190 aa). Residues 485-546 enclose the SH3 domain; that stretch reads EHEQTHRAIF…PAYYAIEVTK (62 aa). A PID domain is found at 558-697; the sequence is SDWIDQFRVK…FQQFYKQFVE (140 aa).

It belongs to the JIP scaffold family. Forms homo- or heterooligomeric complexes. Binds specific components of the JNK signaling pathway namely MAPK8/JNK1, MAPK9/JNK2, MAPK10/JNK3, MAP2K7/MKK7, MAP3K11/MLK3 and DLK1. Also binds the proline-rich domain-containing splice variant of apolipoprotein E receptor 2 (ApoER2). Interacts, via the PID domain, with ARHGEF28. Binds the cytoplasmic tails of LRP1 and LRP2 (Megalin). Binds the TPR motif-containing C-terminal of kinesin light chain, KLC1. Pre-assembled MAPK8IP1 scaffolding complexes are then transported as a cargo of kinesin, to the required subcellular location. Interacts with the cytoplasmic domain of APP. Interacts with DCLK2, VRK2 and MAP3K7/TAK1. Found in a complex with SH3RF1, RAC1, MAP3K11/MLK3, MAP2K7/MKK7 and MAPK8/JNK1. Found in a complex with SH3RF1, RAC2, MAP3K7/TAK1, MAP2K7/MKK7, MAPK8/JNK1 and MAPK9/JNK2. Interacts with SH3RF2. Post-translationally, phosphorylated by MAPK8, MAPK9 and MAPK10. Phosphorylation on Thr-103 is also necessary for the dissociation and activation of MAP3K12. Phosphorylated by VRK2. Hyperphosphorylated during mitosis following activation of stress-activated and MAP kinases. In terms of processing, ubiquitinated. Two preliminary events are required to prime for ubiquitination; phosphorylation and an increased in intracellular calcium concentration. Then, the calcium influx initiates ubiquitination and degradation by the ubiquitin-proteasome pathway. In terms of tissue distribution, highly expressed in brain and pancreatic beta-cells. Weaker expression found in kidney.

Its subcellular location is the cytoplasm. The protein resides in the perinuclear region. The protein localises to the nucleus. It is found in the endoplasmic reticulum membrane. It localises to the mitochondrion membrane. The JNK-interacting protein (JIP) group of scaffold proteins selectively mediates JNK signaling by aggregating specific components of the MAPK cascade to form a functional JNK signaling module. Required for JNK activation in response to excitotoxic stress. Cytoplasmic MAPK8IP1 causes inhibition of JNK-regulated activity by retaining JNK in the cytoplasm and thus inhibiting the JNK phosphorylation of c-Jun. May also participate in ApoER2-specific reelin signaling. Directly, or indirectly, regulates GLUT2 gene expression and beta-cell function. Appears to have a role in cell signaling in mature and developing nerve terminals. May function as a regulator of vesicle transport, through interactions with the JNK-signaling components and motor proteins. Functions as an anti-apoptotic protein and whose level seems to influence the beta-cell death or survival response. Acts as a scaffold protein that coordinates with SH3RF1 in organizing different components of the JNK pathway, including RAC1 or RAC2, MAP3K11/MLK3 or MAP3K7/TAK1, MAP2K7/MKK7, MAPK8/JNK1 and/or MAPK9/JNK2 into a functional multiprotein complex to ensure the effective activation of the JNK signaling pathway. Regulates the activation of MAPK8/JNK1 and differentiation of CD8(+) T-cells. This is C-Jun-amino-terminal kinase-interacting protein 1 (Mapk8ip1) from Rattus norvegicus (Rat).